The primary structure comprises 36 residues: Mating hormone A-factor 1 (36 aa).

Residues 1-21 (MQPSTATAAPKEKTSSEKKDN) constitute a propeptide that is removed on maturation. Cys33 carries the post-translational modification Cysteine methyl ester. Cys33 carries S-farnesyl cysteine lipidation. A propeptide spans 34–36 (VIA) (removed in mature form).

Its subcellular location is the cell membrane. Functionally, the active factor is excreted into the culture medium by haploid cells of the A mating type and acts on cells of the opposite mating type (type alpha). It mediates the conjugation process between the two types by inhibiting the initiation of DNA synthesis in type alpha cells and synchronizing them with type A. This chain is Mating hormone A-factor 1 (MFA1), found in Saccharomyces cerevisiae (strain ATCC 204508 / S288c) (Baker's yeast).